A 145-amino-acid polypeptide reads, in one-letter code: MRTRAGPSKQSRDNLGLRVDFSFFMPAYVGVLSRLCRRGRVCAGPSRARDRGCDGNCALLRFRNEGVRPIGARGRGRTYTKGGSSRSPASWAEQGRPPFTLSVSGTVLCLGRGLPAVRKAGFCRRVSVHGYVAFGTYGKGTYGEG.

The interval 71-95 (GARGRGRTYTKGGSSRSPASWAEQG) is disordered.

This is an uncharacterized protein from Homo sapiens (Human).